We begin with the raw amino-acid sequence, 159 residues long: UPF0262 protein RD1_1069 (159 aa).

Belongs to the UPF0262 family.

The polypeptide is UPF0262 protein RD1_1069 (Roseobacter denitrificans (strain ATCC 33942 / OCh 114) (Erythrobacter sp. (strain OCh 114))).